Here is a 475-residue protein sequence, read N- to C-terminus: Ribulose bisphosphate carboxylase large chain (475 aa).

Residues 1–2 (MA) constitute a propeptide that is removed on maturation. Pro3 is subject to N-acetylproline. An N6,N6,N6-trimethyllysine modification is found at Lys14. Residues Asn123 and Thr173 each contribute to the substrate site. Catalysis depends on Lys175, which acts as the Proton acceptor. Lys177 is a binding site for substrate. Positions 201, 203, and 204 each coordinate Mg(2+). At Lys201 the chain carries N6-carboxylysine. His294 serves as the catalytic Proton acceptor. Arg295, His327, and Ser379 together coordinate substrate.

It belongs to the RuBisCO large chain family. Type I subfamily. Heterohexadecamer of 8 large chains and 8 small chains. Requires Mg(2+) as cofactor.

It localises to the plastid. It is found in the chloroplast. The enzyme catalyses 2 (2R)-3-phosphoglycerate + 2 H(+) = D-ribulose 1,5-bisphosphate + CO2 + H2O. It carries out the reaction D-ribulose 1,5-bisphosphate + O2 = 2-phosphoglycolate + (2R)-3-phosphoglycerate + 2 H(+). RuBisCO catalyzes two reactions: the carboxylation of D-ribulose 1,5-bisphosphate, the primary event in carbon dioxide fixation, as well as the oxidative fragmentation of the pentose substrate in the photorespiration process. Both reactions occur simultaneously and in competition at the same active site. This Nephroselmis olivacea (Green alga) protein is Ribulose bisphosphate carboxylase large chain.